A 250-amino-acid polypeptide reads, in one-letter code: Transcriptional activator protein ExpR (250 aa).

The region spanning 173–238 (KSQEADLFSQ…HAIRLGVEMN (66 aa)) is the HTH luxR-type domain. The segment at residues 197–216 (YQEIALILGITTSTVKFHIG) is a DNA-binding region (H-T-H motif).

Belongs to the autoinducer-regulated transcriptional regulatory protein family.

Functions as an OHLL responsive transcriptional regulator that acts in virulence (soft rot disease) through the activation of genes for plant tissue macerating enzymes. The chain is Transcriptional activator protein ExpR (expR) from Dickeya dadantii (strain 3937) (Erwinia chrysanthemi (strain 3937)).